Here is a 262-residue protein sequence, read N- to C-terminus: Plant intracellular Ras-group-related LRR protein 7 (262 aa).

LRR repeat units follow at residues 19–42 (WRST…VLQV), 43–66 (GNSL…VGTL), 68–89 (NMQR…IGYL), 90–112 (RNLK…LGSL), 113–135 (SNLQ…VGDL), 137–158 (NMLL…IGGC), 159–181 (SSLE…ICNL), 182–204 (VCLK…LLKD), and 206–231 (KALQ…GFTE).

It belongs to the SHOC2 family. As to expression, widely expressed and preferentially in leaf sheathes.

Leucine-rich repeat protein that likely mediates protein interactions, possibly in the context of signal transduction. The polypeptide is Plant intracellular Ras-group-related LRR protein 7 (IRL7) (Oryza sativa subsp. japonica (Rice)).